Reading from the N-terminus, the 207-residue chain is Large ribosomal subunit protein bL25 (207 aa).

The interval 171–207 (ESVVTVEVPEDATESTTAPEAAAAPADAAAAPAADAK) is disordered. Low complexity predominate over residues 184-207 (ESTTAPEAAAAPADAAAAPAADAK).

It belongs to the bacterial ribosomal protein bL25 family. CTC subfamily. In terms of assembly, part of the 50S ribosomal subunit; part of the 5S rRNA/L5/L18/L25 subcomplex. Contacts the 5S rRNA. Binds to the 5S rRNA independently of L5 and L18.

Its function is as follows. This is one of the proteins that binds to the 5S RNA in the ribosome where it forms part of the central protuberance. The protein is Large ribosomal subunit protein bL25 of Bifidobacterium longum subsp. infantis (strain ATCC 15697 / DSM 20088 / JCM 1222 / NCTC 11817 / S12).